The primary structure comprises 502 residues: Mitochondrial fusion and transport protein UGO1 (502 aa).

Residue M1 is modified to N-acetylmethionine. Topologically, residues 1-293 (MNNNNVTEAT…VINSPDISKS (293 aa)) are cytoplasmic. The tract at residues 1-294 (MNNNNVTEAT…INSPDISKSF (294 aa)) is binds FZO1. A Solcar repeat occupies 288–383 (PDISKSFILA…NSFFNKLFDL (96 aa)). A helical; Signal-anchor for type II membrane protein transmembrane segment spans residues 294 to 314 (FILALGAGVFTSIILLPVDLI). Positions 312 to 502 (DLIRTRLIVT…VDINMEQEKF (191 aa)) are binds MGM1. Over 315-502 (RTRLIVTSFK…VDINMEQEKF (188 aa)) the chain is Mitochondrial intermembrane.

In terms of assembly, interacts with FZO1 through its cytoplasmic domain and with MGM1 through its mitochondrial intermembrane space domain.

The protein localises to the mitochondrion outer membrane. Its function is as follows. Required for mitochondrial fusion as well as normal mitochondrial morphology by bridging the essential interaction between FZO1 and MGM1. May coordinate fusion of inner and outer membranes during mitochondrial fusion. This Saccharomyces cerevisiae (strain ATCC 204508 / S288c) (Baker's yeast) protein is Mitochondrial fusion and transport protein UGO1.